A 260-amino-acid polypeptide reads, in one-letter code: 3-methyl-2-oxobutanoate hydroxymethyltransferase (260 aa).

The Mg(2+) site is built by Asp-42 and Asp-81. 3-methyl-2-oxobutanoate-binding positions include 42-43, Asp-81, and Lys-109; that span reads DS. Glu-111 provides a ligand contact to Mg(2+). Glu-178 functions as the Proton acceptor in the catalytic mechanism.

This sequence belongs to the PanB family. In terms of assembly, homodecamer; pentamer of dimers. Mg(2+) serves as cofactor.

Its subcellular location is the cytoplasm. The catalysed reaction is 3-methyl-2-oxobutanoate + (6R)-5,10-methylene-5,6,7,8-tetrahydrofolate + H2O = 2-dehydropantoate + (6S)-5,6,7,8-tetrahydrofolate. Its pathway is cofactor biosynthesis; (R)-pantothenate biosynthesis; (R)-pantoate from 3-methyl-2-oxobutanoate: step 1/2. Catalyzes the reversible reaction in which hydroxymethyl group from 5,10-methylenetetrahydrofolate is transferred onto alpha-ketoisovalerate to form ketopantoate. The polypeptide is 3-methyl-2-oxobutanoate hydroxymethyltransferase (Vesicomyosocius okutanii subsp. Calyptogena okutanii (strain HA)).